Consider the following 146-residue polypeptide: Leghemoglobin 1 (146 aa).

The Globin domain occupies 2–146 (GFTAQQDALV…LAAAIKKAMS (145 aa)). Residues Ser13 and Ser14 each carry the phosphoserine; by CCAMK modification. At Tyr30 the chain carries Nitrated tyrosine. Phosphoserine; by CCAMK is present on residues Ser45 and Ser55. Residue Ser45 coordinates heme b. His61 provides a ligand contact to O2. 3 residues coordinate heme b: Lys64, His93, and Lys96. At Ser123 the chain carries Phosphoserine; by CCAMK. Tyr134 is subject to Nitrated tyrosine.

The protein belongs to the plant globin family. As to quaternary structure, monomer. Post-translationally, nitrated in effective nodules and particularly in hypoxic conditions; this mechanism may play a protective role in the symbiosis by buffering toxic peroxynitrite NO(2)(-). Nitration level decrease during nodule senescence. Phosphorylated by CCAMK at serine residues in a Ca(2+)-dependent manner; the phosphorylation at Ser-45 disrupts the molecular environment of its porphyrin ring oxygen binding pocket, thus leading to a reduced oxygen consumption and to the delivery of oxygen O(2) to symbiosomes. As to expression, specifically and strongly expressed in root nodules and at low levels in seedlings.

The protein localises to the cytoplasm. The protein resides in the cytosol. It localises to the nucleus. Functionally, leghemoglobin that reversibly binds oxygen O(2) through a pentacoordinated heme iron. In root nodules, facilitates the diffusion of oxygen to the bacteroids while preventing the bacterial nitrogenase from being inactivated by buffering dioxygen, nitric oxide and carbon monoxide, and promoting the formation of reactive oxygen species (ROS, e.g. H(2)O(2)). This role is essential for symbiotic nitrogen fixation (SNF). This chain is Leghemoglobin 1, found in Lotus japonicus (Lotus corniculatus var. japonicus).